We begin with the raw amino-acid sequence, 149 residues long: 3-hydroxyacyl-[acyl-carrier-protein] dehydratase FabZ (149 aa).

Residue H53 is part of the active site.

Belongs to the thioester dehydratase family. FabZ subfamily.

It is found in the cytoplasm. The catalysed reaction is a (3R)-hydroxyacyl-[ACP] = a (2E)-enoyl-[ACP] + H2O. Functionally, involved in unsaturated fatty acids biosynthesis. Catalyzes the dehydration of short chain beta-hydroxyacyl-ACPs and long chain saturated and unsaturated beta-hydroxyacyl-ACPs. The protein is 3-hydroxyacyl-[acyl-carrier-protein] dehydratase FabZ of Neisseria meningitidis serogroup C / serotype 2a (strain ATCC 700532 / DSM 15464 / FAM18).